We begin with the raw amino-acid sequence, 324 residues long: Phospho-N-acetylmuramoyl-pentapeptide-transferase (324 aa).

10 helical membrane passes run 5–25, 52–72, 77–97, 122–142, 149–169, 176–196, 201–221, 227–247, 253–273, and 302–322; these read GLLV…PLFI, PTMG…IMAI, LGAE…IGFL, VIAI…YIMI, FELG…GSNA, LDGL…IIAV, FGVA…LVFN, VFMG…VAIL, LLVI…IQVI, and VVVT…YIGV.

It belongs to the glycosyltransferase 4 family. MraY subfamily. Mg(2+) serves as cofactor.

It is found in the cell membrane. The catalysed reaction is UDP-N-acetyl-alpha-D-muramoyl-L-alanyl-gamma-D-glutamyl-meso-2,6-diaminopimeloyl-D-alanyl-D-alanine + di-trans,octa-cis-undecaprenyl phosphate = di-trans,octa-cis-undecaprenyl diphospho-N-acetyl-alpha-D-muramoyl-L-alanyl-D-glutamyl-meso-2,6-diaminopimeloyl-D-alanyl-D-alanine + UMP. Its pathway is cell wall biogenesis; peptidoglycan biosynthesis. In terms of biological role, catalyzes the initial step of the lipid cycle reactions in the biosynthesis of the cell wall peptidoglycan: transfers peptidoglycan precursor phospho-MurNAc-pentapeptide from UDP-MurNAc-pentapeptide onto the lipid carrier undecaprenyl phosphate, yielding undecaprenyl-pyrophosphoryl-MurNAc-pentapeptide, known as lipid I. The polypeptide is Phospho-N-acetylmuramoyl-pentapeptide-transferase (Bacillus cereus (strain AH820)).